Consider the following 216-residue polypeptide: 3-isopropylmalate dehydratase small subunit (216 aa).

Belongs to the LeuD family. LeuD type 1 subfamily. In terms of assembly, heterodimer of LeuC and LeuD.

The catalysed reaction is (2R,3S)-3-isopropylmalate = (2S)-2-isopropylmalate. It functions in the pathway amino-acid biosynthesis; L-leucine biosynthesis; L-leucine from 3-methyl-2-oxobutanoate: step 2/4. Its function is as follows. Catalyzes the isomerization between 2-isopropylmalate and 3-isopropylmalate, via the formation of 2-isopropylmaleate. The polypeptide is 3-isopropylmalate dehydratase small subunit (Marinomonas sp. (strain MWYL1)).